Consider the following 596-residue polypeptide: uncharacterized protein (596 aa).

The interval 1 to 31 (MSTSNDPVVSSHDPIKQEKEQETDLEAQVEH) is disordered. Residues 1–37 (MSTSNDPVVSSHDPIKQEKEQETDLEAQVEHKKRNER) are Cytoplasmic-facing. Residues 13–22 (DPIKQEKEQE) show a composition bias toward basic and acidic residues. The chain crosses the membrane as a helical span at residues 38-58 (GNAFVGFLILIFVYYLLRGGS). The Lumenal segment spans residues 59 to 596 (NDNDKQEMSH…ILVSDSGEEA (538 aa)). Asn118 is a glycosylation site (N-linked (GlcNAc...) asparagine). Residue His197 participates in Zn(2+) binding. Residue Asp199 is part of the active site. Asp232 serves as a coordination point for Zn(2+). The active-site Proton acceptor is Glu266. Residues Glu267 and Asp295 each contribute to the Zn(2+) site. N-linked (GlcNAc...) asparagine glycans are attached at residues Asn466, Asn541, and Asn555. A Zn(2+)-binding site is contributed by His565.

This sequence belongs to the peptidase M20A family. Requires Zn(2+) as cofactor.

Its subcellular location is the vacuole membrane. This is an uncharacterized protein from Schizosaccharomyces pombe (strain 972 / ATCC 24843) (Fission yeast).